Reading from the N-terminus, the 311-residue chain is Olfactory receptor 6B1 (311 aa).

Residues 1–25 (MELENQTRVTKFILVGFPGSLSMRA) lie on the Extracellular side of the membrane. N-linked (GlcNAc...) asparagine glycosylation occurs at Asn5. A helical transmembrane segment spans residues 26–46 (AMFLIFLVAYILTVAENVIII). The Cytoplasmic portion of the chain corresponds to 47-54 (LLVLQNRP). Residues 55–75 (LHKPMYFFLANLSFLETWYIS) form a helical membrane-spanning segment. At 76 to 99 (VTVPKLLFSFWSVNNSISFTLCMI) the chain is on the extracellular side. A disulfide bridge links Cys97 with Cys189. A helical transmembrane segment spans residues 100–120 (QLYFFIALMCTECVLLAAMAY). The Cytoplasmic segment spans residues 121–139 (DRYVAICRPLHYPTIMSHG). The helical transmembrane segment at 140–160 (LCFRLALGSWAIGFGISLAKI) threads the bilayer. Residues 161–196 (YFISCLSFCGPNVINHFFCDISPVLNLSCTDMSITE) lie on the Extracellular side of the membrane. The chain crosses the membrane as a helical span at residues 197 to 217 (LVDFILALVIFLFPLFITVLS). Topologically, residues 218-235 (YGCILATILCMPTGKQKA) are cytoplasmic. The chain crosses the membrane as a helical span at residues 236 to 256 (FSTCASHLVVVTIFYSAIIFM). The Extracellular segment spans residues 257–269 (YARPRVIHAFNMN). A helical transmembrane segment spans residues 270-290 (KIISIFYAIVTPSLNPFIYCL). At 291–311 (RNREVKEALKKLAYCQASRSD) the chain is on the cytoplasmic side.

It belongs to the G-protein coupled receptor 1 family.

It localises to the cell membrane. Functionally, odorant receptor. In Homo sapiens (Human), this protein is Olfactory receptor 6B1 (OR6B1).